A 105-amino-acid chain; its full sequence is Thioredoxin (105 aa).

In terms of domain architecture, Thioredoxin spans 2–105; it reads VKQIESKYAF…KLEATINELI (104 aa). Lys3 bears the N6-acetyllysine mark. At Lys8 the chain carries N6-succinyllysine. Active-site nucleophile residues include Cys32 and Cys35. Cys32 and Cys35 are joined by a disulfide. Residue Lys39 is modified to N6-acetyllysine. S-nitrosocysteine occurs at positions 62 and 69. The residue at position 73 (Cys73) is an S-nitrosocysteine; alternate. Lys94 is modified (N6-acetyllysine; alternate). Lys94 carries the post-translational modification N6-succinyllysine; alternate.

It belongs to the thioredoxin family. As to quaternary structure, homodimer; disulfide-linked. Interacts with TXNIP through the redox-active site. Interacts with MAP3K5 and CASP3. Interacts with APEX1; the interaction stimulates the FOS/JUN AP-1 DNA-binding activity in a redox-dependent manner. Post-translationally, in the fully reduced protein, both Cys-69 and Cys-73 are nitrosylated in response to nitric oxide (NO). When two disulfide bonds are present in the protein, only Cys-73 is nitrosylated. Cys-73 can serve as donor for nitrosylation of target proteins. In terms of tissue distribution, erythrocytes.

The protein localises to the nucleus. It is found in the cytoplasm. It localises to the secreted. In terms of biological role, participates in various redox reactions through the reversible oxidation of its active center dithiol to a disulfide and catalyzes dithiol-disulfide exchange reactions. Plays a role in the reversible S-nitrosylation of cysteine residues in target proteins, and thereby contributes to the response to intracellular nitric oxide. Nitrosylates the active site Cys of CASP3 in response to nitric oxide (NO), and thereby inhibits caspase-3 activity. Induces the FOS/JUN AP-1 DNA binding activity in ionizing radiation (IR) cells through its oxidation/reduction status and stimulates AP-1 transcriptional activity. This chain is Thioredoxin (TXN), found in Sus scrofa (Pig).